The sequence spans 237 residues: Undecaprenyl-diphosphatase (237 aa).

Transmembrane regions (helical) follow at residues 38 to 58 (QTAV…LDGI), 65 to 85 (WRII…GVLF), 92 to 112 (LFSS…ILMF), 126 to 146 (MSFL…FPGI), 166 to 186 (ALQY…ILGL), 191 to 211 (VTIL…YVLS), and 217 to 237 (GKIW…YLAG).

The protein belongs to the UppP family.

The protein resides in the cell inner membrane. The enzyme catalyses di-trans,octa-cis-undecaprenyl diphosphate + H2O = di-trans,octa-cis-undecaprenyl phosphate + phosphate + H(+). In terms of biological role, catalyzes the dephosphorylation of undecaprenyl diphosphate (UPP). Confers resistance to bacitracin. The chain is Undecaprenyl-diphosphatase from Thermotoga maritima (strain ATCC 43589 / DSM 3109 / JCM 10099 / NBRC 100826 / MSB8).